The primary structure comprises 170 residues: Small ribosomal subunit protein uS5 (170 aa).

In terms of domain architecture, S5 DRBM spans 12-75 (WSELLVSVRR…NAAKKSMIRV (64 aa)).

The protein belongs to the universal ribosomal protein uS5 family. Part of the 30S ribosomal subunit. Contacts proteins S4 and S8.

With S4 and S12 plays an important role in translational accuracy. Its function is as follows. Located at the back of the 30S subunit body where it stabilizes the conformation of the head with respect to the body. This Wolbachia sp. subsp. Brugia malayi (strain TRS) protein is Small ribosomal subunit protein uS5.